Reading from the N-terminus, the 134-residue chain is D-ribose pyranase (134 aa).

The active-site Proton donor is H20. Substrate-binding positions include D28, H101, and 123 to 125; that span reads YSN.

It belongs to the RbsD / FucU family. RbsD subfamily. As to quaternary structure, homodecamer.

It is found in the cytoplasm. It carries out the reaction beta-D-ribopyranose = beta-D-ribofuranose. Its pathway is carbohydrate metabolism; D-ribose degradation; D-ribose 5-phosphate from beta-D-ribopyranose: step 1/2. In terms of biological role, catalyzes the interconversion of beta-pyran and beta-furan forms of D-ribose. This chain is D-ribose pyranase, found in Pseudomonas syringae pv. tomato (strain ATCC BAA-871 / DC3000).